A 231-amino-acid chain; its full sequence is Ribonuclease 3 (231 aa).

The region spanning 7 to 135 (IQAIESKLNF…ILGAVYLDGG (129 aa)) is the RNase III domain. Residue Glu48 coordinates Mg(2+). Residue Asp52 is part of the active site. Residues Asn121 and Glu124 each coordinate Mg(2+). Residue Glu124 is part of the active site. One can recognise a DRBM domain in the interval 160 to 229 (NPKNRLQQFT…AKQALSTHDN (70 aa)).

It belongs to the ribonuclease III family. As to quaternary structure, homodimer. The cofactor is Mg(2+).

It localises to the cytoplasm. It catalyses the reaction Endonucleolytic cleavage to 5'-phosphomonoester.. In terms of biological role, digests double-stranded RNA. Involved in the processing of primary rRNA transcript to yield the immediate precursors to the large and small rRNAs (23S and 16S). Processes some mRNAs, and tRNAs when they are encoded in the rRNA operon. Processes pre-crRNA and tracrRNA of type II CRISPR loci if present in the organism. In Chlamydia trachomatis serovar A (strain ATCC VR-571B / DSM 19440 / HAR-13), this protein is Ribonuclease 3.